Reading from the N-terminus, the 128-residue chain is Ribonuclease P protein component (128 aa).

This sequence belongs to the RnpA family. Consists of a catalytic RNA component (M1 or rnpB) and a protein subunit.

It carries out the reaction Endonucleolytic cleavage of RNA, removing 5'-extranucleotides from tRNA precursor.. Functionally, RNaseP catalyzes the removal of the 5'-leader sequence from pre-tRNA to produce the mature 5'-terminus. It can also cleave other RNA substrates such as 4.5S RNA. The protein component plays an auxiliary but essential role in vivo by binding to the 5'-leader sequence and broadening the substrate specificity of the ribozyme. This Chromohalobacter salexigens (strain ATCC BAA-138 / DSM 3043 / CIP 106854 / NCIMB 13768 / 1H11) protein is Ribonuclease P protein component.